Reading from the N-terminus, the 576-residue chain is Proline--tRNA ligase (576 aa).

It belongs to the class-II aminoacyl-tRNA synthetase family. ProS type 1 subfamily. Homodimer.

The protein resides in the cytoplasm. The enzyme catalyses tRNA(Pro) + L-proline + ATP = L-prolyl-tRNA(Pro) + AMP + diphosphate. Catalyzes the attachment of proline to tRNA(Pro) in a two-step reaction: proline is first activated by ATP to form Pro-AMP and then transferred to the acceptor end of tRNA(Pro). As ProRS can inadvertently accommodate and process non-cognate amino acids such as alanine and cysteine, to avoid such errors it has two additional distinct editing activities against alanine. One activity is designated as 'pretransfer' editing and involves the tRNA(Pro)-independent hydrolysis of activated Ala-AMP. The other activity is designated 'posttransfer' editing and involves deacylation of mischarged Ala-tRNA(Pro). The misacylated Cys-tRNA(Pro) is not edited by ProRS. This Pelobacter propionicus (strain DSM 2379 / NBRC 103807 / OttBd1) protein is Proline--tRNA ligase.